Reading from the N-terminus, the 1392-residue chain is DNA-directed RNA polymerase subunit beta (1392 aa).

The interval leucine 1372–glutamate 1392 is disordered.

It belongs to the RNA polymerase beta chain family. In terms of assembly, the RNAP catalytic core consists of 2 alpha, 1 beta, 1 beta' and 1 omega subunit. When a sigma factor is associated with the core the holoenzyme is formed, which can initiate transcription.

The catalysed reaction is RNA(n) + a ribonucleoside 5'-triphosphate = RNA(n+1) + diphosphate. DNA-dependent RNA polymerase catalyzes the transcription of DNA into RNA using the four ribonucleoside triphosphates as substrates. This chain is DNA-directed RNA polymerase subunit beta, found in Sphingopyxis alaskensis (strain DSM 13593 / LMG 18877 / RB2256) (Sphingomonas alaskensis).